A 130-amino-acid chain; its full sequence is Mediator of RNA polymerase II transcription subunit 10 (130 aa).

Belongs to the Mediator complex subunit 10 family. As to quaternary structure, component of the Mediator complex.

Its subcellular location is the nucleus. In terms of biological role, component of the Mediator complex, a coactivator involved in the regulated transcription of nearly all RNA polymerase II-dependent genes. Mediator functions as a bridge to convey information from gene-specific regulatory proteins to the basal RNA polymerase II transcription machinery. Mediator is recruited to promoters by direct interactions with regulatory proteins and serves as a scaffold for the assembly of a functional preinitiation complex with RNA polymerase II and the general transcription factors. This chain is Mediator of RNA polymerase II transcription subunit 10 (MED10), found in Anopheles gambiae (African malaria mosquito).